We begin with the raw amino-acid sequence, 199 residues long: Recombination protein RecR (199 aa).

A C4-type zinc finger spans residues 56-71 (CATCGNVAQEELCNIC). Residues 79–174 (SVICVVEEPK…KVTRLASGLP (96 aa)) enclose the Toprim domain.

Belongs to the RecR family.

Its function is as follows. May play a role in DNA repair. It seems to be involved in an RecBC-independent recombinational process of DNA repair. It may act with RecF and RecO. This Streptomyces avermitilis (strain ATCC 31267 / DSM 46492 / JCM 5070 / NBRC 14893 / NCIMB 12804 / NRRL 8165 / MA-4680) protein is Recombination protein RecR.